The following is a 260-amino-acid chain: Malonyl-[acyl-carrier protein] O-methyltransferase (260 aa).

The protein belongs to the methyltransferase superfamily.

It carries out the reaction malonyl-[ACP] + S-adenosyl-L-methionine = malonyl-[ACP] methyl ester + S-adenosyl-L-homocysteine. Its pathway is cofactor biosynthesis; biotin biosynthesis. In terms of biological role, converts the free carboxyl group of a malonyl-thioester to its methyl ester by transfer of a methyl group from S-adenosyl-L-methionine (SAM). It allows to synthesize pimeloyl-ACP via the fatty acid synthetic pathway. This is Malonyl-[acyl-carrier protein] O-methyltransferase from Chlorobium phaeovibrioides (strain DSM 265 / 1930) (Prosthecochloris vibrioformis (strain DSM 265)).